The sequence spans 648 residues: Macrolide export ATP-binding/permease protein MacB (648 aa).

An ABC transporter domain is found at 5-243 (LELKDIRRSY…TGGTEPVVNT (239 aa)). ATP is bound at residue 41–48 (GASGSGKS). A run of 4 helical transmembrane segments spans residues 273–293 (LLTM…VVVG), 523–543 (LFLT…VMNI), 576–596 (AVLV…LIAF), and 611–631 (PLAL…FGWL).

This sequence belongs to the ABC transporter superfamily. Macrolide exporter (TC 3.A.1.122) family. As to quaternary structure, homodimer. Part of the tripartite efflux system MacAB-TolC, which is composed of an inner membrane transporter, MacB, a periplasmic membrane fusion protein, MacA, and an outer membrane component, TolC. The complex forms a large protein conduit and can translocate molecules across both the inner and outer membranes. Interacts with MacA.

It is found in the cell inner membrane. Its function is as follows. Part of the tripartite efflux system MacAB-TolC. MacB is a non-canonical ABC transporter that contains transmembrane domains (TMD), which form a pore in the inner membrane, and an ATP-binding domain (NBD), which is responsible for energy generation. Confers resistance against macrolides. The chain is Macrolide export ATP-binding/permease protein MacB from Escherichia coli (strain UTI89 / UPEC).